Here is a 504-residue protein sequence, read N- to C-terminus: Cytochrome P450 71B4 (504 aa).

A helical membrane pass occupies residues 1–21 (MVSLLSFFLLLLVPIFFLLIF). Cys-446 contributes to the heme binding site.

This sequence belongs to the cytochrome P450 family. Heme serves as cofactor.

Its subcellular location is the membrane. This chain is Cytochrome P450 71B4 (CYP71B4), found in Arabidopsis thaliana (Mouse-ear cress).